A 125-amino-acid chain; its full sequence is Small ribosomal subunit protein eS8 (125 aa).

Positions Met1 to Leu11 are enriched in polar residues. Residues Met1–Asp38 are disordered. The segment covering Lys25–Asp38 has biased composition (basic and acidic residues).

It belongs to the eukaryotic ribosomal protein eS8 family. Part of the 30S ribosomal subunit.

The protein is Small ribosomal subunit protein eS8 of Methanobrevibacter smithii (strain ATCC 35061 / DSM 861 / OCM 144 / PS).